Reading from the N-terminus, the 220-residue chain is Cysteine-rich venom protein (220 aa).

In terms of domain architecture, SCP spans 20 to 147; sequence DLHNSLRRSV…AYKYFYVCQY (128 aa). Disulfide bonds link C56-C134, C73-C148, C129-C145, C167-C174, C170-C179, C183-C215, C192-C209, and C200-C213. Residues 183 to 215 form the ShKT domain; that stretch reads CTREDEFINCNDLVKQGCQTDYLKSNCAASCFC.

As to expression, expressed by the venom gland.

The protein localises to the secreted. Its function is as follows. Blocks contraction of smooth muscle elicited by high potassium-induced depolarization, but does not block caffeine-stimulated contraction. May target voltage-gated calcium channels in smooth muscle. The sequence is that of Cysteine-rich venom protein from Echis coloratus (Carpet viper).